A 360-amino-acid chain; its full sequence is Phenylalanine--tRNA ligase alpha subunit (360 aa).

Mg(2+) is bound at residue Glu255.

This sequence belongs to the class-II aminoacyl-tRNA synthetase family. Phe-tRNA synthetase alpha subunit type 1 subfamily. As to quaternary structure, tetramer of two alpha and two beta subunits. It depends on Mg(2+) as a cofactor.

The protein localises to the cytoplasm. It catalyses the reaction tRNA(Phe) + L-phenylalanine + ATP = L-phenylalanyl-tRNA(Phe) + AMP + diphosphate + H(+). The protein is Phenylalanine--tRNA ligase alpha subunit of Rhizorhabdus wittichii (strain DSM 6014 / CCUG 31198 / JCM 15750 / NBRC 105917 / EY 4224 / RW1) (Sphingomonas wittichii).